A 358-amino-acid chain; its full sequence is Homoserine O-acetyltransferase (358 aa).

The 303-residue stretch at 41 to 343 (NAVLICHALT…DYGHDAFLVD (303 aa)) folds into the AB hydrolase-1 domain. The active-site Nucleophile is Ser-143. Arg-212 is a substrate binding site. Catalysis depends on residues Asp-304 and His-337. Substrate is bound at residue Asp-338.

The protein belongs to the AB hydrolase superfamily. MetX family. Homodimer.

It localises to the cytoplasm. The catalysed reaction is L-homoserine + acetyl-CoA = O-acetyl-L-homoserine + CoA. It functions in the pathway amino-acid biosynthesis; L-methionine biosynthesis via de novo pathway; O-acetyl-L-homoserine from L-homoserine: step 1/1. Its function is as follows. Transfers an acetyl group from acetyl-CoA to L-homoserine, forming acetyl-L-homoserine. The protein is Homoserine O-acetyltransferase of Haemophilus influenzae (strain 86-028NP).